Consider the following 874-residue polypeptide: Alanine--tRNA ligase (874 aa).

The Zn(2+) site is built by histidine 564, histidine 568, cysteine 665, and histidine 669.

The protein belongs to the class-II aminoacyl-tRNA synthetase family. Requires Zn(2+) as cofactor.

It localises to the cytoplasm. The enzyme catalyses tRNA(Ala) + L-alanine + ATP = L-alanyl-tRNA(Ala) + AMP + diphosphate. Its function is as follows. Catalyzes the attachment of alanine to tRNA(Ala) in a two-step reaction: alanine is first activated by ATP to form Ala-AMP and then transferred to the acceptor end of tRNA(Ala). Also edits incorrectly charged Ser-tRNA(Ala) and Gly-tRNA(Ala) via its editing domain. The chain is Alanine--tRNA ligase from Burkholderia cenocepacia (strain HI2424).